Reading from the N-terminus, the 290-residue chain is Pyridoxal kinase PdxY (290 aa).

Residues Ser-12 and Thr-47–Gln-48 contribute to the substrate site. ATP-binding positions include Asp-114, Glu-151, Lys-184, and Arg-211–Leu-214. Residue Asp-225 participates in substrate binding.

This sequence belongs to the pyridoxine kinase family. PdxY subfamily. Homodimer. The cofactor is Mg(2+).

It catalyses the reaction pyridoxal + ATP = pyridoxal 5'-phosphate + ADP + H(+). The protein operates within cofactor metabolism; pyridoxal 5'-phosphate salvage; pyridoxal 5'-phosphate from pyridoxal: step 1/1. In terms of biological role, pyridoxal kinase involved in the salvage pathway of pyridoxal 5'-phosphate (PLP). Catalyzes the phosphorylation of pyridoxal to PLP. In Pseudomonas fluorescens (strain Pf0-1), this protein is Pyridoxal kinase PdxY.